The primary structure comprises 310 residues: MEIPHIPVLLNEVQEIFKNLKTGYFLDCTLGFGGHSEALLKNHPDLKFIACDQDQQALEFSKKRLKDFRNRITFMQSNFSEVLEKISHKEELRGILADIGVSSFQLDNNERGFSVNSDFLDMRMNQNSKISAYEIINTYTKEQLTSIFKDYGELHDAHFIAEKICLERSKNPIKSAKELYQIIGKGKQNHRKISKATLAFQAIRIEVNQELKVLKDFLGHLENLKPKNCILAIISFHSLEDRIVKQFFKKWSKNCICNEKIMRCECGNNHSLGQIITKKAISASKEELLKNSRSSCAKMRAFYFNNLDNK.

Residues 33–35 (GGH), Asp-52, Phe-79, Asp-98, and Gln-105 contribute to the S-adenosyl-L-methionine site.

Belongs to the methyltransferase superfamily. RsmH family.

It localises to the cytoplasm. It catalyses the reaction cytidine(1402) in 16S rRNA + S-adenosyl-L-methionine = N(4)-methylcytidine(1402) in 16S rRNA + S-adenosyl-L-homocysteine + H(+). In terms of biological role, specifically methylates the N4 position of cytidine in position 1402 (C1402) of 16S rRNA. In Campylobacter jejuni (strain RM1221), this protein is Ribosomal RNA small subunit methyltransferase H.